The sequence spans 353 residues: Fe(3+) ions import ATP-binding protein FbpC (353 aa).

The region spanning 9–239 (VTFENVTKKF…PASAFIADFM (231 aa)) is the ABC transporter domain. 41–48 (GPSGCGKT) lines the ATP pocket.

Belongs to the ABC transporter superfamily. Fe(3+) ion importer (TC 3.A.1.10) family. As to quaternary structure, the complex is composed of two ATP-binding proteins (FbpC), two transmembrane proteins (FbpB) and a solute-binding protein (FbpA).

The protein localises to the cell inner membrane. The catalysed reaction is Fe(3+)(out) + ATP + H2O = Fe(3+)(in) + ADP + phosphate + H(+). Functionally, part of the ABC transporter complex FbpABC involved in Fe(3+) ions import. Responsible for energy coupling to the transport system. This chain is Fe(3+) ions import ATP-binding protein FbpC, found in Brucella abortus (strain 2308).